The following is a 264-amino-acid chain: Anamorsin homolog 2 (264 aa).

The interval 1-142 (MAATAAALAV…KVSWSMGSSF (142 aa)) is N-terminal SAM-like domain. The segment at 143–174 (PLKKATKGLPKIQIDDDSELIDEDSLLTEDDL) is linker. The [2Fe-2S] cluster site is built by Cys185, Cys194, Cys197, and Cys199. Residues 185–199 (CEVGATRKACKNCTC) are fe-S binding site A. Residues Cys225, Cys228, Cys236, and Cys239 each contribute to the [4Fe-4S] cluster site. Short sequence motifs (cx2C motif) lie at residues 225–228 (CGNC) and 236–239 (CGTC). A fe-S binding site B region spans residues 225–239 (CGNCGLGDAFRCGTC).

It belongs to the anamorsin family. In terms of assembly, monomer. The cofactor is [2Fe-2S] cluster. [4Fe-4S] cluster is required as a cofactor.

Its subcellular location is the cytoplasm. The protein resides in the mitochondrion intermembrane space. Functionally, component of the cytosolic iron-sulfur (Fe-S) protein assembly (CIA) machinery. Required for the maturation of extramitochondrial Fe-S proteins. Part of an electron transfer chain functioning in an early step of cytosolic Fe-S biogenesis, facilitating the de novo assembly of a [4Fe-4S] cluster on the cytosolic Fe-S scaffold complex. Electrons are transferred from NADPH via a FAD- and FMN-containing diflavin oxidoreductase. Together with the diflavin oxidoreductase, also required for the assembly of the diferric tyrosyl radical cofactor of ribonucleotide reductase (RNR), probably by providing electrons for reduction during radical cofactor maturation in the catalytic small subunit. This chain is Anamorsin homolog 2, found in Oryza sativa subsp. indica (Rice).